A 380-amino-acid polypeptide reads, in one-letter code: Succinyl-diaminopimelate desuccinylase (380 aa).

Residue His-70 coordinates Zn(2+). Residue Asp-72 is part of the active site. Asp-104 provides a ligand contact to Zn(2+). The active-site Proton acceptor is the Glu-138. Zn(2+)-binding residues include Glu-139, Glu-167, and His-353.

The protein belongs to the peptidase M20A family. DapE subfamily. Homodimer. The cofactor is Zn(2+). Co(2+) is required as a cofactor.

It carries out the reaction N-succinyl-(2S,6S)-2,6-diaminopimelate + H2O = (2S,6S)-2,6-diaminopimelate + succinate. It participates in amino-acid biosynthesis; L-lysine biosynthesis via DAP pathway; LL-2,6-diaminopimelate from (S)-tetrahydrodipicolinate (succinylase route): step 3/3. Catalyzes the hydrolysis of N-succinyl-L,L-diaminopimelic acid (SDAP), forming succinate and LL-2,6-diaminopimelate (DAP), an intermediate involved in the bacterial biosynthesis of lysine and meso-diaminopimelic acid, an essential component of bacterial cell walls. The protein is Succinyl-diaminopimelate desuccinylase of Ectopseudomonas mendocina (strain ymp) (Pseudomonas mendocina).